A 122-amino-acid chain; its full sequence is Large ribosomal subunit protein uL14 (122 aa).

It belongs to the universal ribosomal protein uL14 family. Part of the 50S ribosomal subunit. Forms a cluster with proteins L3 and L19. In the 70S ribosome, L14 and L19 interact and together make contacts with the 16S rRNA in bridges B5 and B8.

Functionally, binds to 23S rRNA. Forms part of two intersubunit bridges in the 70S ribosome. This chain is Large ribosomal subunit protein uL14, found in Nocardia farcinica (strain IFM 10152).